Consider the following 240-residue polypeptide: Probable transcriptional regulatory protein Csal_0810 (240 aa).

It belongs to the TACO1 family.

It localises to the cytoplasm. In Chromohalobacter salexigens (strain ATCC BAA-138 / DSM 3043 / CIP 106854 / NCIMB 13768 / 1H11), this protein is Probable transcriptional regulatory protein Csal_0810.